A 349-amino-acid polypeptide reads, in one-letter code: Ferredoxin--NADP reductase 1 (349 aa).

7 residues coordinate FAD: Glu-36, Lys-44, Tyr-48, Val-88, Leu-123, Asp-290, and Ser-331.

Belongs to the ferredoxin--NADP reductase type 2 family. Homodimer. The cofactor is FAD.

It carries out the reaction 2 reduced [2Fe-2S]-[ferredoxin] + NADP(+) + H(+) = 2 oxidized [2Fe-2S]-[ferredoxin] + NADPH. The sequence is that of Ferredoxin--NADP reductase 1 from Bacillus cereus (strain ATCC 10987 / NRS 248).